The following is a 266-amino-acid chain: Glutamate racemase (266 aa).

Residues 7-8 (DS) and 39-40 (YG) contribute to the substrate site. Cys-70 functions as the Proton donor/acceptor in the catalytic mechanism. 71–72 (NT) serves as a coordination point for substrate. Cys-186 (proton donor/acceptor) is an active-site residue. 187-188 (TH) serves as a coordination point for substrate.

The protein belongs to the aspartate/glutamate racemases family.

It carries out the reaction L-glutamate = D-glutamate. The protein operates within cell wall biogenesis; peptidoglycan biosynthesis. In terms of biological role, provides the (R)-glutamate required for cell wall biosynthesis. This Campylobacter curvus (strain 525.92) protein is Glutamate racemase.